Reading from the N-terminus, the 622-residue chain is MRKLYCVLLLSAFEFTYMINFGRGQNYWEHPYQNSDVYRPINEHREHPKEYEYPLLQEHTYQQEDSGEDENTLQHAYPIDHEGAEPAPQEQNLFSSIEIVERSNYMGNPWTEYMAKYDIEKVHGSGIRVDLGEDAEVAGTQYRLPSGKCPVFGKGIIIENSKTTFLTPVATENQDLKDGGFAFPPTEPLISPMTLDQMRHLYKDNEYVKNLDELTLCSRHAGNMNPDNDKNSNYKYPAVYDYEDKKCHILYIAAQENNGPRYCNKDESKRNSMFCFRPAKDKLFENYTYLSKNVVDNWEEVCPRKNLENAKFGLWVDGNCEDIPHVNEFSANDLFECNKLVFELSASDQPKQYEQHLTDYEKIKEGFKNKNASMIKSAFLPTGAFKADRYKSRGKGYNWGNYNTETQKCEIFNVKPTCLINNSSYIATTALSHPNEVENNFPCSLYKDEIKKEIERESKRIKLNDNDDEGNKKIIAPRIFISDDKDSLKCPCDPEIVSNSTCNFFVCKCVEKRAEVTSNNEVVVKEEYKDEYADIPEHKPTYDNMKIIIASSAAVAVLATILMVYLYKRKGNAEKYDKMDEPQDYGKSTSRNDEMLDPEASFWGEEKRASHTTPVLMEKPYY.

The signal sequence occupies residues 1-24 (MRKLYCVLLLSAFEFTYMINFGRG). Residues 25-546 (QNYWEHPYQN…EHKPTYDNMK (522 aa)) are Extracellular-facing. Disulfide bonds link Cys-149–Cys-302, Cys-217–Cys-247, Cys-263–Cys-275, Cys-320–Cys-418, and Cys-337–Cys-409. Asn-286, Asn-371, Asn-421, Asn-422, and Asn-499 each carry an N-linked (GlcNAc...) asparagine glycan. 3 disulfide bridges follow: Cys-443–Cys-502, Cys-490–Cys-507, and Cys-492–Cys-509. Residues 547–567 (IIIASSAAVAVLATILMVYLY) traverse the membrane as a helical segment. At 568 to 622 (KRKGNAEKYDKMDEPQDYGKSTSRNDEMLDPEASFWGEEKRASHTTPVLMEKPYY) the chain is on the cytoplasmic side. Residues 577–607 (DKMDEPQDYGKSTSRNDEMLDPEASFWGEEK) are disordered.

This sequence belongs to the apicomplexan parasites AMA1 family.

The protein resides in the membrane. In terms of biological role, involved in parasite invasion of erythrocytes. The protein is Apical membrane antigen 1 (AMA-1) of Plasmodium falciparum (isolate thtn / Thailand).